Here is a 363-residue protein sequence, read N- to C-terminus: UDP-N-acetylglucosamine--N-acetylmuramyl-(pentapeptide) pyrophosphoryl-undecaprenol N-acetylglucosamine transferase (363 aa).

Residues 15–17 (TGG), Asn127, Arg163, Ser191, Ile244, 263–268 (ALTVSE), and Gln288 each bind UDP-N-acetyl-alpha-D-glucosamine.

Belongs to the glycosyltransferase 28 family. MurG subfamily.

Its subcellular location is the cell inner membrane. It catalyses the reaction di-trans,octa-cis-undecaprenyl diphospho-N-acetyl-alpha-D-muramoyl-L-alanyl-D-glutamyl-meso-2,6-diaminopimeloyl-D-alanyl-D-alanine + UDP-N-acetyl-alpha-D-glucosamine = di-trans,octa-cis-undecaprenyl diphospho-[N-acetyl-alpha-D-glucosaminyl-(1-&gt;4)]-N-acetyl-alpha-D-muramoyl-L-alanyl-D-glutamyl-meso-2,6-diaminopimeloyl-D-alanyl-D-alanine + UDP + H(+). The protein operates within cell wall biogenesis; peptidoglycan biosynthesis. Its function is as follows. Cell wall formation. Catalyzes the transfer of a GlcNAc subunit on undecaprenyl-pyrophosphoryl-MurNAc-pentapeptide (lipid intermediate I) to form undecaprenyl-pyrophosphoryl-MurNAc-(pentapeptide)GlcNAc (lipid intermediate II). This Pectobacterium carotovorum subsp. carotovorum (strain PC1) protein is UDP-N-acetylglucosamine--N-acetylmuramyl-(pentapeptide) pyrophosphoryl-undecaprenol N-acetylglucosamine transferase.